Consider the following 198-residue polypeptide: FMN-dependent NADH:quinone oxidoreductase (198 aa).

FMN is bound by residues serine 10, 16–18 (SQS), 94–97 (MYNF), and 138–141 (TRGG).

The protein belongs to the azoreductase type 1 family. As to quaternary structure, homodimer. It depends on FMN as a cofactor.

The catalysed reaction is 2 a quinone + NADH + H(+) = 2 a 1,4-benzosemiquinone + NAD(+). The enzyme catalyses N,N-dimethyl-1,4-phenylenediamine + anthranilate + 2 NAD(+) = 2-(4-dimethylaminophenyl)diazenylbenzoate + 2 NADH + 2 H(+). Quinone reductase that provides resistance to thiol-specific stress caused by electrophilic quinones. Functionally, also exhibits azoreductase activity. Catalyzes the reductive cleavage of the azo bond in aromatic azo compounds to the corresponding amines. The polypeptide is FMN-dependent NADH:quinone oxidoreductase (Shewanella baltica (strain OS223)).